A 92-amino-acid chain; its full sequence is Acylphosphatase (92 aa).

The region spanning 5–92 (RVKVKVNGRV…GVFERFEVRF (88 aa)) is the Acylphosphatase-like domain. Catalysis depends on residues R20 and N38.

This sequence belongs to the acylphosphatase family.

It catalyses the reaction an acyl phosphate + H2O = a carboxylate + phosphate + H(+). The polypeptide is Acylphosphatase (acyP) (Syntrophotalea carbinolica (strain DSM 2380 / NBRC 103641 / GraBd1) (Pelobacter carbinolicus)).